A 166-amino-acid chain; its full sequence is Large ribosomal subunit protein uL10 (166 aa).

It belongs to the universal ribosomal protein uL10 family. As to quaternary structure, part of the ribosomal stalk of the 50S ribosomal subunit. The N-terminus interacts with L11 and the large rRNA to form the base of the stalk. The C-terminus forms an elongated spine to which L12 dimers bind in a sequential fashion forming a multimeric L10(L12)X complex.

In terms of biological role, forms part of the ribosomal stalk, playing a central role in the interaction of the ribosome with GTP-bound translation factors. The chain is Large ribosomal subunit protein uL10 from Streptococcus pneumoniae (strain ATCC 700669 / Spain 23F-1).